The following is a 949-amino-acid chain: Glycine dehydrogenase (decarboxylating) (949 aa).

N6-(pyridoxal phosphate)lysine is present on Lys-704.

The protein belongs to the GcvP family. In terms of assembly, the glycine cleavage system is composed of four proteins: P, T, L and H. Requires pyridoxal 5'-phosphate as cofactor.

The catalysed reaction is N(6)-[(R)-lipoyl]-L-lysyl-[glycine-cleavage complex H protein] + glycine + H(+) = N(6)-[(R)-S(8)-aminomethyldihydrolipoyl]-L-lysyl-[glycine-cleavage complex H protein] + CO2. In terms of biological role, the glycine cleavage system catalyzes the degradation of glycine. The P protein binds the alpha-amino group of glycine through its pyridoxal phosphate cofactor; CO(2) is released and the remaining methylamine moiety is then transferred to the lipoamide cofactor of the H protein. This Bacteroides fragilis (strain ATCC 25285 / DSM 2151 / CCUG 4856 / JCM 11019 / LMG 10263 / NCTC 9343 / Onslow / VPI 2553 / EN-2) protein is Glycine dehydrogenase (decarboxylating).